The chain runs to 137 residues: Hydrogenase maturation factor HypA (137 aa).

Ni(2+) is bound at residue His2. Zn(2+) is bound by residues Cys73, Cys75, Cys105, and Cys108.

This sequence belongs to the HypA/HybF family.

In terms of biological role, involved in the maturation of [NiFe] hydrogenases. Required for nickel insertion into the metal center of the hydrogenase. This Methanosarcina mazei (strain ATCC BAA-159 / DSM 3647 / Goe1 / Go1 / JCM 11833 / OCM 88) (Methanosarcina frisia) protein is Hydrogenase maturation factor HypA.